Consider the following 130-residue polypeptide: Cytochrome c-type biogenesis protein CcmE (130 aa).

The Cytoplasmic segment spans residues 1-7 (MKKKHKR). Residues 8–28 (LLITSGIFCFLSCAVFFILTT) form a helical; Signal-anchor for type II membrane protein membrane-spanning segment. Residues 29 to 130 (LKENISFFYT…DENYMPKVLK (102 aa)) are Extracellular-facing. Residues H120 and Y124 each coordinate heme.

This sequence belongs to the CcmE/CycJ family.

The protein resides in the cell membrane. Functionally, heme chaperone required for the biogenesis of c-type cytochromes. Transiently binds heme delivered by CcmC and transfers the heme to apo-cytochromes in a process facilitated by CcmF and CcmH. The protein is Cytochrome c-type biogenesis protein CcmE of Wolbachia pipientis wMel.